We begin with the raw amino-acid sequence, 367 residues long: Inositol-3-phosphate synthase (367 aa).

The NAD(+) site is built by Asp78, Ala137, Tyr157, Ser200, Asp235, and Lys248.

It belongs to the myo-inositol 1-phosphate synthase family. NAD(+) serves as cofactor.

The catalysed reaction is D-glucose 6-phosphate = 1D-myo-inositol 3-phosphate. Key enzyme in myo-inositol biosynthesis pathway that catalyzes the conversion of glucose 6-phosphate to 1D-myo-inositol 3-phosphate in a NAD-dependent manner. The polypeptide is Inositol-3-phosphate synthase (ino1) (Mycobacterium tuberculosis (strain CDC 1551 / Oshkosh)).